Here is a 357-residue protein sequence, read N- to C-terminus: Putative ABC transporter ATP-binding protein MG303 (357 aa).

Residues L72–T312 enclose the ABC transporter domain. G107–T114 is an ATP binding site.

The protein belongs to the ABC transporter superfamily.

The chain is Putative ABC transporter ATP-binding protein MG303 from Mycoplasma genitalium (strain ATCC 33530 / DSM 19775 / NCTC 10195 / G37) (Mycoplasmoides genitalium).